We begin with the raw amino-acid sequence, 156 residues long: Sperm acrosome-associated protein 5 (156 aa).

A signal peptide spans methionine 1 to alanine 18. The 129-residue stretch at lysine 19 to asparagine 147 folds into the C-type lysozyme domain. Cystine bridges form between cysteine 24-cysteine 144, cysteine 48-cysteine 132, cysteine 82-cysteine 97, and cysteine 93-cysteine 111. The active site involves glutamate 53.

Belongs to the glycosyl hydrolase 22 family.

The protein localises to the secreted. It catalyses the reaction Hydrolysis of (1-&gt;4)-beta-linkages between N-acetylmuramic acid and N-acetyl-D-glucosamine residues in a peptidoglycan and between N-acetyl-D-glucosamine residues in chitodextrins.. The polypeptide is Sperm acrosome-associated protein 5 (SPACA5) (Bos taurus (Bovine)).